A 203-amino-acid chain; its full sequence is Sarcosine oxidase subunit gamma (203 aa).

The protein belongs to the SoxG family. In terms of assembly, heterotetramer composed of subunits alpha (SoxA), beta (SoxB), gamma (SoxG) and delta (SoxD).

It is found in the cytoplasm. It carries out the reaction sarcosine + (6S)-5,6,7,8-tetrahydrofolate + O2 = (6R)-5,10-methylene-5,6,7,8-tetrahydrofolate + glycine + H2O2. It catalyses the reaction sarcosine + O2 + H2O = formaldehyde + glycine + H2O2. In the presence of tetrahydrofolate, catalyzes the oxidative demethylation of sarcosine to yield glycine, 5,10-methylenetetrahydrofolate and hydrogen peroxide. In the absence of tetrahydrofolate, catalyzes the oxidative demethylation of sarcosine to yield glycine, formaldehyde and hydrogen peroxide. In Arthrobacter sp, this protein is Sarcosine oxidase subunit gamma (soxG).